Reading from the N-terminus, the 104-residue chain is Ig lambda-1 chain C region (104 aa).

The 94-residue stretch at 6-99 folds into the Ig-like domain; sequence PSVTLFPPSS…EENTVEKSLS (94 aa). C27 and C85 form a disulfide bridge.

The chain is Ig lambda-1 chain C region from Rattus norvegicus (Rat).